Consider the following 330-residue polypeptide: uncharacterized protein (330 aa).

Residues 4-242 (LSIQNLVVEY…AGEVLFEQST (239 aa)) form the ABC transporter domain. 40-47 (GPSGCGKT) is an ATP binding site. Residue 210–330 (DRVVELTPDF…LIEHRALAND (121 aa)) participates in a nucleoside 3',5'-cyclic phosphate binding.

The protein belongs to the ABC transporter superfamily. The complex is composed of two ATP-binding proteins (MT0079), two transmembrane proteins (MT0078) and a solute-binding protein.

Probably part of an ABC transporter complex. Probably responsible for energy coupling to the transport system. This is an uncharacterized protein from Mycobacterium tuberculosis (strain CDC 1551 / Oshkosh).